Consider the following 561-residue polypeptide: MSSVAITICILSLVASLGLWLGNIKIRGVGLSIGGVLFGGIIISHIMNLPTVASFMQQKNIVLDSQTLYFVQEFGLILFVYTIGIQVGPGFFASLRSSGLKLNAFAALIVLLGGLCSVILYYLFSIPLPAILGILSGAVTNTPSLGAGKQIIAELGGEQMTELMGMGYAIAYPFGIIGVLLAMWLIRLIFKIRPERELQFFDKEQQRQKGLAGINIRITNPNINNILLREIPDYDLNTVIYSRLKRNDELIIPHPNTTLYLNDILHLVGNKKSLNKMQIILGEEAGHEPLNSGDSPIKNERAVVTNEQVCGKKLAQLQIQSQYDVVISRINRAGVELIPSDEMALQFGDVLHLVGRQKNIATVLSLIGNAQQKLQQVQMLPVFIGIGLGVLLGSIPIYLPGFPVALKLGLAGGPLVVALVLARIGSIGKLYWFMPPSANLALREIGIVLFLSVIGIHAGEHFFSTLLSKDGFSWICYGAIITLLPLLIAGIIARYYSKMNYLTICGLLAGAMTDTPALAFANAIQENNGASVLAYATVYPLTTFLRIMLPQLIAVLLWAAH.

5 helical membrane passes run 4 to 24 (VAIT…LGNI), 29 to 49 (VGLS…IMNL), 74 to 94 (FGLI…FFAS), 104 to 124 (AFAA…YYLF), and 166 to 186 (MGYA…MWLI). 2 RCK C-terminal domains span residues 198–283 (LQFF…ILGE) and 285–369 (AGHE…LIGN). 6 consecutive transmembrane segments (helical) span residues 379-399 (MLPV…PIYL), 411-433 (AGGP…LYWF), 447-467 (IVLF…STLL), 472-492 (FSWI…AGII), 501-521 (YLTI…LAFA), and 538-558 (VYPL…VLLW).

The protein belongs to the AAE transporter (TC 2.A.81) family. YidE subfamily.

It is found in the cell membrane. This is Putative transport protein DNO_0009 from Dichelobacter nodosus (strain VCS1703A).